We begin with the raw amino-acid sequence, 512 residues long: ATP synthase subunit beta 2 (512 aa).

174-181 (GGAGVGKT) lines the ATP pocket. Residues 479 to 494 (RRKEEAAREADARRDA) show a composition bias toward basic and acidic residues. Residues 479-512 (RRKEEAAREADARRDAAAGAASGSAGPQGAQHGR) are disordered.

Belongs to the ATPase alpha/beta chains family. F-type ATPases have 2 components, CF(1) - the catalytic core - and CF(0) - the membrane proton channel. CF(1) has five subunits: alpha(3), beta(3), gamma(1), delta(1), epsilon(1). CF(0) has three main subunits: a(1), b(2) and c(9-12). The alpha and beta chains form an alternating ring which encloses part of the gamma chain. CF(1) is attached to CF(0) by a central stalk formed by the gamma and epsilon chains, while a peripheral stalk is formed by the delta and b chains.

Its subcellular location is the cell inner membrane. The enzyme catalyses ATP + H2O + 4 H(+)(in) = ADP + phosphate + 5 H(+)(out). Its function is as follows. Produces ATP from ADP in the presence of a proton gradient across the membrane. The catalytic sites are hosted primarily by the beta subunits. The chain is ATP synthase subunit beta 2 from Burkholderia thailandensis (strain ATCC 700388 / DSM 13276 / CCUG 48851 / CIP 106301 / E264).